The chain runs to 107 residues: ATP-dependent Clp protease adapter protein ClpS (107 aa).

Residues 1–20 (MAQKHEHDTSVITESAPKQK) form a disordered region.

Belongs to the ClpS family. As to quaternary structure, binds to the N-terminal domain of the chaperone ClpA.

Involved in the modulation of the specificity of the ClpAP-mediated ATP-dependent protein degradation. This chain is ATP-dependent Clp protease adapter protein ClpS, found in Myxococcus xanthus (strain DK1622).